The primary structure comprises 331 residues: NADH-quinone oxidoreductase subunit H (331 aa).

Transmembrane regions (helical) follow at residues 7 to 27 (ALVT…AVVI), 81 to 101 (MIFT…FAIV), 114 to 134 (IGIL…LFAG), 154 to 174 (ISYE…VGSF), 187 to 207 (VWFI…GVAV), 238 to 258 (FFVG…TLFF), 271 to 291 (WLSF…FILI), and 310 to 330 (VCLP…LAAA).

The protein belongs to the complex I subunit 1 family. NDH-1 is composed of 13 different subunits. Subunits NuoA, H, J, K, L, M, N constitute the membrane sector of the complex.

Its subcellular location is the cell inner membrane. The enzyme catalyses a quinone + NADH + 5 H(+)(in) = a quinol + NAD(+) + 4 H(+)(out). In terms of biological role, NDH-1 shuttles electrons from NADH, via FMN and iron-sulfur (Fe-S) centers, to quinones in the respiratory chain. The immediate electron acceptor for the enzyme in this species is believed to be ubiquinone. Couples the redox reaction to proton translocation (for every two electrons transferred, four hydrogen ions are translocated across the cytoplasmic membrane), and thus conserves the redox energy in a proton gradient. This subunit may bind ubiquinone. The polypeptide is NADH-quinone oxidoreductase subunit H (Pseudomonas aeruginosa (strain ATCC 15692 / DSM 22644 / CIP 104116 / JCM 14847 / LMG 12228 / 1C / PRS 101 / PAO1)).